The sequence spans 366 residues: GTPase Obg (366 aa).

One can recognise an Obg domain in the interval 1 to 161; that stretch reads MRFVDEARIQ…FNLRLELKIL (161 aa). The tract at residues 121–148 is disordered; sequence SGGRGGKGNEHFKSSTMRAPRFSQPGEP. Positions 162-334 constitute an OBG-type G domain; the sequence is ADAGLIGLPN…LVQELWQVCE (173 aa). GTP is bound by residues 168–175, 193–197, 217–220, 287–290, and 315–317; these read GLPNAGKS, FTTLT, DIPG, NKID, and SAR. 2 residues coordinate Mg(2+): S175 and T195.

Belongs to the TRAFAC class OBG-HflX-like GTPase superfamily. OBG GTPase family. As to quaternary structure, monomer. Mg(2+) serves as cofactor.

The protein resides in the cytoplasm. In terms of biological role, an essential GTPase which binds GTP, GDP and possibly (p)ppGpp with moderate affinity, with high nucleotide exchange rates and a fairly low GTP hydrolysis rate. Plays a role in control of the cell cycle, stress response, ribosome biogenesis and in those bacteria that undergo differentiation, in morphogenesis control. This Desulfovibrio desulfuricans (strain ATCC 27774 / DSM 6949 / MB) protein is GTPase Obg.